Reading from the N-terminus, the 208-residue chain is Elongation factor Ts, chloroplastic (208 aa).

It belongs to the EF-Ts family.

It is found in the plastid. Its subcellular location is the chloroplast. Functionally, associates with the EF-Tu.GDP complex and induces the exchange of GDP to GTP. It remains bound to the aminoacyl-tRNA.EF-Tu.GTP complex up to the GTP hydrolysis stage on the ribosome. The sequence is that of Elongation factor Ts, chloroplastic (tsf) from Cyanidium caldarium (Red alga).